Reading from the N-terminus, the 459-residue chain is FBD-associated F-box protein At1g61320 (459 aa).

The interval 1–25 (MAPPTKRTRVEMAESSNKRMKPSET) is disordered. Positions 21-69 (KPSETVPEDVLELMMSTYLPVQSLLTTRVLSKRFRETEVRSLDLDFSGI) constitute an F-box domain. An FBD domain is found at 396 to 428 (VKIIGYKGHWHELDIVEFFVKNAPSLKRLELQM).

This is FBD-associated F-box protein At1g61320 from Arabidopsis thaliana (Mouse-ear cress).